The chain runs to 104 residues: Large ribosomal subunit protein uL24 (104 aa).

This sequence belongs to the universal ribosomal protein uL24 family. Part of the 50S ribosomal subunit.

Its function is as follows. One of two assembly initiator proteins, it binds directly to the 5'-end of the 23S rRNA, where it nucleates assembly of the 50S subunit. In terms of biological role, one of the proteins that surrounds the polypeptide exit tunnel on the outside of the subunit. In Clostridium botulinum (strain Eklund 17B / Type B), this protein is Large ribosomal subunit protein uL24.